Consider the following 276-residue polypeptide: Short-chain dehydrogenase anuF (276 aa).

NADP(+) is bound by residues Ile-18, Asp-68, Lys-130, Tyr-176, Lys-180, Val-209, and Thr-211. Residue Tyr-176 is the Proton acceptor of the active site. Tyr-176 serves as the catalytic Proton donor. The active-site Lowers pKa of active site Tyr is the Lys-180.

This sequence belongs to the short-chain dehydrogenases/reductases (SDR) family.

It carries out the reaction (2R,9S)-annullatin H + A = (2R)-annullatin F + AH2. Cytochrome P450 monooxygenase; part of the gene cluster that mediates the biosynthesis of annullatin D, an alkylated aromatic polyketide with a fused dihydrobenzofuran lactone ring system that exhibits potent agonistic activities toward the cannabinoid receptors. Within the pathway, anuF is involved in the formation of (2R)-annullatin F from the diastereomer of (2S,9S)-annullatin H (compound 12). The annullatin backbone 2-hydroxymethyl-3-pentylphenol is assembled from one acetyl-CoA starter unit and 5 malonyl-CoA elongation units by cooperation of the highly reducing polyketide synthase anuA, the short-chain dehydrogenase anuB and the oxidoreductase anuC, before being hydroxylated at the C-5 alkyl chain by the cytochrome P450 monooxygenase anuE to form (8S)-annullatin E. The prenyltransferase anuH subsequently installs one isoprenyl group at the benzene ring to form (8S)-annullatin J. Enzymatic or nonenzymatic dihydro-benzofuran ring formation between the prenyl and the phenolic hydroxyl groups in (8S)-annullatin J results in two diastereomers (2S,9S)-annullatin H and compound 12. The intermediate (2S,9S)-annullatin H is then converted to (2S,9S)-annullatin D by the FAD-linked oxidoreductase anuG-catalyzed five-member lactone ring formation. The isomer 12 acts as a substrate for the short-chain dehydrogenase anuF and is oxidized to (2R)-annullatin F, which is subsequently acetylated by an acetyltransferase leading to (2R)-annullatin G formation. The remaining enzymes identified within the cluster, anuD, anuI and anuJ, seem not to be involved in annullatin biosynthesis. This chain is Short-chain dehydrogenase anuF, found in Penicillium roqueforti (strain FM164).